Reading from the N-terminus, the 300-residue chain is Iodotyrosine deiodinase (300 aa).

The chain crosses the membrane as a helical span at residues 15-31 (VGLISVSIAAGVALGQL). Residues 110-114 (RRSVR), S138, and 138-139 (SG) each bind FMN. A140, E167, Y171, and K192 together coordinate 3,5-diiodo-L-tyrosine. Positions 140, 167, 171, and 192 each coordinate 3-iodo-L-tyrosine. Residues 247–249 (TTT) and R289 each bind FMN.

It belongs to the nitroreductase family. FMN is required as a cofactor. Post-translationally, may be cleaved at Gln-55. The cleaved form retains catalytic activity.

The protein localises to the membrane. It carries out the reaction 2 iodide + L-tyrosine + 2 NADP(+) = 3,5-diiodo-L-tyrosine + 2 NADPH + H(+). It catalyses the reaction iodide + L-tyrosine + NADP(+) = 3-iodo-L-tyrosine + NADPH. The enzyme catalyses 3-iodo-L-tyrosine + iodide + NADP(+) = 3,5-diiodo-L-tyrosine + NADPH + H(+). The catalysed reaction is L-tyrosine + chloride + NADP(+) = 3-chloro-L-tyrosine + NADPH. It carries out the reaction bromide + L-tyrosine + NADP(+) = 3-bromo-L-tyrosine + NADPH. In terms of biological role, catalyzes the dehalogenation of halotyrosines such as 3,5-diiodo-L-tyrosine. Likely to also catalyze the dehalogenation of other halotyrosines such as 3-bromo-L-tyrosine, 3-chloro-L-tyrosine and 3-iodo-L-tyrosine. In Daphnia pulex (Water flea), this protein is Iodotyrosine deiodinase.